We begin with the raw amino-acid sequence, 381 residues long: MSRHEGVSCDACLKGNFRGRRYKCLICYDYDLCASCYESGATTTRHTTDHPMQCILTRVDFDLYYGGEAFSVEQPQSFTCPYCGKMGYTETSLQEHVTSEHAETSTEVICPICAALPGGDPNHVTDDFAAHLTLEHRAPRDLDESSGVRHVRRMFHPGRGLGGPRARRTNMHFTSSSTGGLSSSQSSYSPSNREAMDPIAELLSQLSGVRRSTGGQLNSSGPSASQLQQLQMQLQLERQQAQAARQQLETARNATRRNNASNVTTTITQSTAATNTSSTENNQQSIQNSQFLLTRLNDPKMTEAERQSIESERADRSLFVQELLLSTLMQEESSSSDEDERGEIADFGAMGCVDIMPLDVALENLNLKESNKGNEPPPPPL.

The segment at 4–60 (HEGVSCDACLKGNFRGRRYKCLICYDYDLCASCYESGATTTRHTTDHPMQCILTRVD) adopts a ZZ-type zinc-finger fold. Residues Cys-9, Cys-12, Cys-24, Cys-27, Cys-33, Cys-36, His-46, and His-50 each coordinate Zn(2+). The C2H2-type zinc-finger motif lies at 78–101 (FTCPYCGKMGYTETSLQEHVTSEH). 2 disordered regions span residues 154–193 (MFHP…PSNR) and 241–286 (AQAA…QQSI). A compositionally biased stretch (low complexity) spans 175 to 191 (SSSTGGLSSSQSSYSPS). Residues 223–261 (SASQLQQLQMQLQLERQQAQAARQQLETARNATRRNNAS) adopt a coiled-coil conformation.

This sequence belongs to the KCMF1 family. Component of the SIFI complex, composed of kcmf1, ubr4 and calmodulin.

The protein localises to the cytoplasm. It is found in the late endosome. It localises to the lysosome. The catalysed reaction is S-ubiquitinyl-[E2 ubiquitin-conjugating enzyme]-L-cysteine + [acceptor protein]-L-lysine = [E2 ubiquitin-conjugating enzyme]-L-cysteine + N(6)-ubiquitinyl-[acceptor protein]-L-lysine.. It functions in the pathway protein modification; protein ubiquitination. E3 ubiquitin-protein ligase which accepts ubiquitin from an E2 ubiquitin-conjugating enzyme and then transfers it to targeted substrates, promoting their degradation by the proteasome. Together with UBR4, component of the N-end rule pathway: ubiquitinates proteins bearing specific N-terminal residues that are destabilizing according to the N-end rule, leading to their degradation. Does not ubiquitinate proteins that are acetylated at the N-terminus. Together with ubr4, part of a protein quality control pathway that catalyzes ubiquitination and degradation of proteins that have been oxidized in response to reactive oxygen species (ROS): recognizes proteins with an Arg-CysO3(H) degron at the N-terminus, and mediates assembly of heterotypic 'Lys-63'-/'Lys-27'-linked branched ubiquitin chains on oxidized proteins, leading to their degradation by autophagy. Catalytic component of the SIFI complex, a multiprotein complex required to inhibit the mitochondrial stress response after a specific stress event has been resolved: ubiquitinates and degrades (1) components of the HRI-mediated signaling of the integrated stress response, such as dele1 and eif2ak1/hri, as well as (2) unimported mitochondrial precursors. Within the SIFI complex, ubr4 initiates ubiquitin chain that are further elongated or branched by kcmf1. This is E3 ubiquitin-protein ligase KCMF1 (kcmf1) from Xenopus laevis (African clawed frog).